A 443-amino-acid chain; its full sequence is Probable D-serine dehydratase (443 aa).

Lys-106 carries the post-translational modification N6-(pyridoxal phosphate)lysine.

It belongs to the serine/threonine dehydratase family. DsdA subfamily. Requires pyridoxal 5'-phosphate as cofactor.

It carries out the reaction D-serine = pyruvate + NH4(+). The chain is Probable D-serine dehydratase from Cupriavidus pinatubonensis (strain JMP 134 / LMG 1197) (Cupriavidus necator (strain JMP 134)).